Reading from the N-terminus, the 691-residue chain is CREB-regulated transcription coactivator 2 (691 aa).

Over residues 1-20 (MATSGANGPGSATASASNPR) the composition is skewed to polar residues. Residues 1–30 (MATSGANGPGSATASASNPRKFSEKIALQK) form a disordered region. At alanine 2 the chain carries N-acetylalanine. Residue arginine 51 is modified to Asymmetric dimethylarginine; by PRMT6. 3 positions are modified to phosphoserine: serine 70, serine 86, and serine 90. Asymmetric dimethylarginine; by PRMT6 is present on residues arginine 99, arginine 120, and arginine 123. Residue serine 136 is modified to Phosphoserine. Asymmetric dimethylarginine; by PRMT6 is present on residues arginine 161 and arginine 168. Threonine 169 is modified (phosphothreonine). Serine 171 bears the Phosphoserine; by AMPK, MARK2, SIK1 and SIK2 mark. Residues 174-186 (ALHTSVMNPNPQD) show a composition bias toward polar residues. A disordered region spans residues 174-195 (ALHTSVMNPNPQDTYPGPTPPS). Position 192 is a phosphothreonine (threonine 192). Residue lysine 234 forms a Glycyl lysine isopeptide (Lys-Gly) (interchain with G-Cter in SUMO2) linkage. The Nuclear export signal motif lies at 271-287 (TGGSLPDLTNLHFPPPL). Phosphoserine; by MARK2 is present on serine 274. Disordered regions lie at residues 280 to 306 (NLHFPPPLPTPLDPEETVYPSLSGGNS) and 335 to 491 (HSPL…YSPP). Phosphoserine occurs at positions 306, 368, 393, 433, and 456. Low complexity-rich tracts occupy residues 335–383 (HSPL…HALP) and 390–411 (PSLSAPALSSSSSSSSTSSPVL). The segment covering 447–468 (SQQQLPKQFSPTMSPTLSSITQ) has biased composition (polar residues). The residue at position 488 (tyrosine 488) is a Phosphotyrosine. Serine 489 and serine 492 each carry phosphoserine. The residue at position 501 (threonine 501) is a Phosphothreonine. The disordered stretch occupies residues 513-543 (CLVQPSGGQPPGRQPHYGTLYPPGSSGHGQQ). Residues serine 611, serine 621, and serine 622 each carry the phosphoserine modification.

The protein belongs to the TORC family. As to quaternary structure, binds, as a tetramer, through its N-terminal region, with the bZIP domain of CREB1. 'Arg-314' in the bZIP domain of CREB1 is essential for this interaction. Interaction, via its C-terminal, with TAF4, enhances recruitment of TAF4 to CREB1. Interacts with SIK2. Interacts with 14-3-3 proteins, YWHAB and YWHAG. Interacts (probably when phosphorylated at Ser-171) with YWHAE. Interacts with calmodulin-dependent catalytic subunit PPP3CA/calcineurin A. Interaction with COP1 mediates nuclear export and degradation of CRTC2. Post-translationally, phosphorylation/dephosphorylation states of Ser-171 are required for regulating transduction of CREB activity. CRTCs/TORCs are inactive when phosphorylated, and active when dephosphorylated at this site. This primary site of phosphorylation, is regulated by cAMP and calcium levels and is dependent on the phosphorylation of SIKs (SIK1 and SIK2) by LKB1. Following adenylyl cyclase activation, dephosphorylated at Ser-171 by PPP3CA/calcineurin A resulting in CRTC2 dissociation from 14-3-3 proteins and PPP3CA. Both insulin and AMPK increase this phosphorylation of CRTC2 while glucagon suppresses it. Phosphorylation at Ser-274 by MARK2 is induced under low glucose conditions and dephosphorylated in response to glucose influx. Phosphorylation at Ser-274 promotes interaction with 14-3-3 proteins and translocation to the cytoplasm. In terms of processing, asymmetric dimethylation of arginine resisues by PRMT6 enhances the association of CRTC2 with CREB on the promoters of gluconeogenic genes.

The protein localises to the cytoplasm. Its subcellular location is the nucleus. In terms of biological role, transcriptional coactivator for CREB1 which activates transcription through both consensus and variant cAMP response element (CRE) sites. Acts as a coactivator, in the SIK/TORC signaling pathway, being active when dephosphorylated and acts independently of CREB1 'Ser-133' phosphorylation. Enhances the interaction of CREB1 with TAF4. Regulates gluconeogenesis as a component of the LKB1/AMPK/TORC2 signaling pathway. Regulates the expression of specific genes such as the steroidogenic gene, StAR. Potent coactivator of PPARGC1A and inducer of mitochondrial biogenesis in muscle cells. The polypeptide is CREB-regulated transcription coactivator 2 (Crtc2) (Rattus norvegicus (Rat)).